The chain runs to 359 residues: Peptide chain release factor 1 (359 aa).

Glutamine 235 bears the N5-methylglutamine mark.

Belongs to the prokaryotic/mitochondrial release factor family. Post-translationally, methylated by PrmC. Methylation increases the termination efficiency of RF1.

Its subcellular location is the cytoplasm. Its function is as follows. Peptide chain release factor 1 directs the termination of translation in response to the peptide chain termination codons UAG and UAA. The polypeptide is Peptide chain release factor 1 (Nitrosomonas eutropha (strain DSM 101675 / C91 / Nm57)).